Here is a 505-residue protein sequence, read N- to C-terminus: MTRILVQRGSSGSSSNSSRPSSSSSSSSGSETQINNNIPVPPVTIDEEITDEKQEEVTVVEKAECSDAKDVAVDSDEPADREDDEGLVVAENVHVQSEGIDCDSPVSGGSNSDSPPVPAPPPKPSSTVNPGSNRSVLGSFGALRIGPTRRAAGPRSLVSSRSSPTGSHPSSPRSHSENEGYNSSDEHMPCYVPSHPGSGLEREHQFEAEIRYSKGFEIRRMLEDGNCLFRAVADQVYGDSEAYDLARQMCMDYMEQERDHFSQFITEGFTSYLKRKRRDKVYGNNVEIQALAEMYNRPIHIYSYSTEPINIFQGNYSTDTPPIRLSYHHGNHYNSLVDPHRLTVGAGLGFSSLSGRHVDKEQVKAAIKAQQEHQIDNALLAEGRFYSDLELTEKEIERSVMEASRAEYLMEWSKPRIGPKESSTSNAETSSSGARPSGSDSKPAEAVKEKTVLSSSIEMVLSMGFSYAQAMEAYSIFGDDVDSMVCYVLETSCGGNNRRKGKATE.

Positions 1–191 (MTRILVQRGS…NSSDEHMPCY (191 aa)) are disordered. Positions 9–30 (GSSGSSSNSSRPSSSSSSSSGS) are enriched in low complexity. Positions 51–72 (DEKQEEVTVVEKAECSDAKDVA) are enriched in basic and acidic residues. The segment covering 73–86 (VDSDEPADREDDEG) has biased composition (acidic residues). Residues 115–124 (PPVPAPPPKP) are compositionally biased toward pro residues. The segment covering 159 to 173 (SSRSSPTGSHPSSPR) has biased composition (low complexity). A compositionally biased stretch (basic and acidic residues) spans 174-188 (SHSENEGYNSSDEHM). Residues 216–339 (FEIRRMLEDG…GNHYNSLVDP (124 aa)) form the OTU domain. Asp-224 is a catalytic residue. Residue Cys-227 is the Nucleophile of the active site. His-332 is a catalytic residue. A disordered region spans residues 416–447 (RIGPKESSTSNAETSSSGARPSGSDSKPAEAV). Positions 421–441 (ESSTSNAETSSSGARPSGSDS) are enriched in low complexity. Positions 446–491 (AVKEKTVLSSSIEMVLSMGFSYAQAMEAYSIFGDDVDSMVCYVLET) constitute a UBA domain.

The protein belongs to the peptidase C85 family. Interacts with KDM1C. In terms of tissue distribution, mostly expressed in stems flowers and siliques, and, to a lower extent, in leaves, roots and seedlings.

Its subcellular location is the nucleus. The protein localises to the cytoplasm. It carries out the reaction Thiol-dependent hydrolysis of ester, thioester, amide, peptide and isopeptide bonds formed by the C-terminal Gly of ubiquitin (a 76-residue protein attached to proteins as an intracellular targeting signal).. Hydrolase that can remove conjugated ubiquitin from proteins in vitro and may therefore play an important regulatory role at the level of protein turnover by preventing degradation. Binds chromatin (e.g. nucleosomes and histones) and has enzymatic histone deubiquitinase activity, specific for the H2B histone. Can both repress (e.g. OSR2) and promote (e.g. AN3) the expression of target genes by associating with chromatin, deubiquitinating H2B and regulating its euchromatic histone marks (e.g. H3ac and H3K4me). In association with LDL1/KDM1C, involved in transcriptional gene repression via histone deubiquitination and demethylation. Promotes the concerted epigenetic regulation and repression (e.g. the removal of euchromatic histone acetylation, ubiquitination, and methylation marks) of a set of genes (e.g. GA20OX, WUS, OSR2, ARL and ABI5) that collectively limit plant growth thus stimulating plant growth and increasing cell size. The sequence is that of OVARIAN TUMOR DOMAIN-containing deubiquitinating enzyme 6 from Arabidopsis thaliana (Mouse-ear cress).